Consider the following 211-residue polypeptide: Ribosomal RNA large subunit methyltransferase E (211 aa).

Residues Gly-60, Trp-62, Asp-80, Asp-96, and Asp-121 each coordinate S-adenosyl-L-methionine. The active-site Proton acceptor is the Lys-161.

Belongs to the class I-like SAM-binding methyltransferase superfamily. RNA methyltransferase RlmE family.

The protein localises to the cytoplasm. It catalyses the reaction uridine(2552) in 23S rRNA + S-adenosyl-L-methionine = 2'-O-methyluridine(2552) in 23S rRNA + S-adenosyl-L-homocysteine + H(+). Its function is as follows. Specifically methylates the uridine in position 2552 of 23S rRNA at the 2'-O position of the ribose in the fully assembled 50S ribosomal subunit. The chain is Ribosomal RNA large subunit methyltransferase E from Cellvibrio japonicus (strain Ueda107) (Pseudomonas fluorescens subsp. cellulosa).